The sequence spans 452 residues: Phosphoglucosamine mutase (452 aa).

Catalysis depends on Ser98, which acts as the Phosphoserine intermediate. Positions 98, 239, 241, and 243 each coordinate Mg(2+). Ser98 carries the post-translational modification Phosphoserine.

Belongs to the phosphohexose mutase family. It depends on Mg(2+) as a cofactor. Post-translationally, activated by phosphorylation.

The enzyme catalyses alpha-D-glucosamine 1-phosphate = D-glucosamine 6-phosphate. Functionally, catalyzes the conversion of glucosamine-6-phosphate to glucosamine-1-phosphate. This is Phosphoglucosamine mutase from Anaplasma marginale (strain Florida).